Here is a 451-residue protein sequence, read N- to C-terminus: Bifunctional protein GlmU (451 aa).

Residues 1–230 (MNNPIAAIVL…PADVGGINSR (230 aa)) form a pyrophosphorylase region. UDP-N-acetyl-alpha-D-glucosamine contacts are provided by residues 10–13 (LAAG), Lys-24, Gln-74, 79–80 (GT), 102–104 (YGD), Gly-142, Glu-156, Asn-171, and Asn-228. Asp-104 contacts Mg(2+). Asn-228 contacts Mg(2+). The segment at 231–251 (AELAAAEAQWQAFRREEAMAA) is linker. The tract at residues 252–451 (GASLRAPETV…RKKKAAEQKK (200 aa)) is N-acetyltransferase. UDP-N-acetyl-alpha-D-glucosamine is bound by residues Arg-317 and Lys-335. His-347 serves as the catalytic Proton acceptor. UDP-N-acetyl-alpha-D-glucosamine-binding residues include Tyr-350 and Asn-361. Acetyl-CoA contacts are provided by residues Ala-364, 370 to 371 (NY), Ser-389, Ala-407, and Arg-424.

The protein in the N-terminal section; belongs to the N-acetylglucosamine-1-phosphate uridyltransferase family. This sequence in the C-terminal section; belongs to the transferase hexapeptide repeat family. In terms of assembly, homotrimer. Mg(2+) serves as cofactor.

Its subcellular location is the cytoplasm. It catalyses the reaction alpha-D-glucosamine 1-phosphate + acetyl-CoA = N-acetyl-alpha-D-glucosamine 1-phosphate + CoA + H(+). The enzyme catalyses N-acetyl-alpha-D-glucosamine 1-phosphate + UTP + H(+) = UDP-N-acetyl-alpha-D-glucosamine + diphosphate. It functions in the pathway nucleotide-sugar biosynthesis; UDP-N-acetyl-alpha-D-glucosamine biosynthesis; N-acetyl-alpha-D-glucosamine 1-phosphate from alpha-D-glucosamine 6-phosphate (route II): step 2/2. The protein operates within nucleotide-sugar biosynthesis; UDP-N-acetyl-alpha-D-glucosamine biosynthesis; UDP-N-acetyl-alpha-D-glucosamine from N-acetyl-alpha-D-glucosamine 1-phosphate: step 1/1. It participates in bacterial outer membrane biogenesis; LPS lipid A biosynthesis. Functionally, catalyzes the last two sequential reactions in the de novo biosynthetic pathway for UDP-N-acetylglucosamine (UDP-GlcNAc). The C-terminal domain catalyzes the transfer of acetyl group from acetyl coenzyme A to glucosamine-1-phosphate (GlcN-1-P) to produce N-acetylglucosamine-1-phosphate (GlcNAc-1-P), which is converted into UDP-GlcNAc by the transfer of uridine 5-monophosphate (from uridine 5-triphosphate), a reaction catalyzed by the N-terminal domain. This is Bifunctional protein GlmU from Sphingopyxis alaskensis (strain DSM 13593 / LMG 18877 / RB2256) (Sphingomonas alaskensis).